A 473-amino-acid chain; its full sequence is Cell division protein FtsZ homolog 2-2, chloroplastic (473 aa).

GTP contacts are provided by residues Gly124–Asn128, Gly213–Gly215, Glu244, and Arg248. Thr282 is modified (phosphothreonine; by PGK1). Position 292 (Asp292) interacts with GTP. The disordered stretch occupies residues Glu424–Ser455. Positions Arg445–Ser454 are enriched in polar residues.

It belongs to the FtsZ family. In terms of assembly, aggregates to form a contractile ring-like structure; contraction of the ring was accompanied by an increase in the filament turnover rate. Self-interacts and binds to FTSZ1 in heteropolymers to form two morphologically distinct types of filaments, termed type-I (smooth filaments) and -II (rough filaments), in a GTP-dependent manner. Part of a complex made of ARC3, ARC6, FTSZ1 and FTSZ2. Interacts (via C-terminus) with ARC6. Interacts with CDP1/PARC6. Binds to PGK1. In terms of processing, phosphorylation at Thr-282 is required for the formation of contractile ring at the chloroplast midpoint.

It localises to the plastid. Its subcellular location is the chloroplast stroma. It is found in the chloroplast thylakoid membrane. Functionally, exhibits GTPase activity. Component of the plastid division machinery that forms a contractile ring at the division site. Contributes to plastid division in the vegetative shoot apex, at the shoot apical meristem (SAM) where the proplastid-to-chloroplast transition takes place. The polypeptide is Cell division protein FtsZ homolog 2-2, chloroplastic (Arabidopsis thaliana (Mouse-ear cress)).